We begin with the raw amino-acid sequence, 345 residues long: UDP-3-O-acylglucosamine N-acyltransferase (345 aa).

The active-site Proton acceptor is the His-237.

It belongs to the transferase hexapeptide repeat family. LpxD subfamily. Homotrimer.

It carries out the reaction a UDP-3-O-[(3R)-3-hydroxyacyl]-alpha-D-glucosamine + a (3R)-hydroxyacyl-[ACP] = a UDP-2-N,3-O-bis[(3R)-3-hydroxyacyl]-alpha-D-glucosamine + holo-[ACP] + H(+). It participates in bacterial outer membrane biogenesis; LPS lipid A biosynthesis. Functionally, catalyzes the N-acylation of UDP-3-O-acylglucosamine using 3-hydroxyacyl-ACP as the acyl donor. Is involved in the biosynthesis of lipid A, a phosphorylated glycolipid that anchors the lipopolysaccharide to the outer membrane of the cell. This is UDP-3-O-acylglucosamine N-acyltransferase from Geobacter sp. (strain M21).